The primary structure comprises 167 residues: Lipoprotein signal peptidase (167 aa).

A run of 2 helical transmembrane segments spans residues 56 to 76 and 84 to 104; these read FAPPFVLLMLTGAIVLGVLVF and TPIFLSAFGLIAGGGIGNMID. Residues Asp113 and Asp139 contribute to the active site. Residues 132–152 form a helical membrane-spanning segment; it reads WPIFNVADSAITIGACMLVLF.

The protein belongs to the peptidase A8 family.

Its subcellular location is the cell inner membrane. It catalyses the reaction Release of signal peptides from bacterial membrane prolipoproteins. Hydrolyzes -Xaa-Yaa-Zaa-|-(S,diacylglyceryl)Cys-, in which Xaa is hydrophobic (preferably Leu), and Yaa (Ala or Ser) and Zaa (Gly or Ala) have small, neutral side chains.. The protein operates within protein modification; lipoprotein biosynthesis (signal peptide cleavage). Functionally, this protein specifically catalyzes the removal of signal peptides from prolipoproteins. The sequence is that of Lipoprotein signal peptidase from Chlorobium luteolum (strain DSM 273 / BCRC 81028 / 2530) (Pelodictyon luteolum).